Here is a 279-residue protein sequence, read N- to C-terminus: MEKNCGSGQSKLKALRMHMYFEVDFQEQAQHYQAVLHSRGVTVDLQPIEKLNARFLRLNPDLALCVDENGLWLSANGMKMQPDWKAEIPRLKRASLKSEMIARACQLGEKPVLVDATAGLGHDSLLMAYLGAQIQLVERHPILFTLLEDSKAQAQHDPFLSQFMDRIQLIFADSASYLQQLDQEEKTVDVVYLDPMFPQRDQNQQAIKKQAQVKKQMQLLHLLLPEDGEMDLGDHLLELAKKVAKRVIVKRPRHAIFLANQEPAHQWQGDACRFDAYFQ.

Residues 138–139 and aspartate 194 contribute to the S-adenosyl-L-methionine site; that span reads ER.

This sequence belongs to the methyltransferase superfamily. RsmJ family.

Its subcellular location is the cytoplasm. The enzyme catalyses guanosine(1516) in 16S rRNA + S-adenosyl-L-methionine = N(2)-methylguanosine(1516) in 16S rRNA + S-adenosyl-L-homocysteine + H(+). Functionally, specifically methylates the guanosine in position 1516 of 16S rRNA. The chain is Ribosomal RNA small subunit methyltransferase J from Acinetobacter baumannii (strain AYE).